A 79-amino-acid polypeptide reads, in one-letter code: UPF0180 protein BCE_1513 (79 aa).

The protein belongs to the UPF0180 family.

The chain is UPF0180 protein BCE_1513 from Bacillus cereus (strain ATCC 10987 / NRS 248).